A 487-amino-acid chain; its full sequence is GTPase Der (487 aa).

EngA-type G domains follow at residues 2–164 (KTIA…SLAK) and 203–374 (IAVG…QRFA). Residues 8-15 (GKPNVGKS), 55-59 (DTGGI), 116-119 (NKVD), 209-216 (GRVNVGKS), 256-260 (DTAGI), and 320-323 (NKWD) each bind GTP. The region spanning 375–459 (YRIPTSALND…PILLSVKGKN (85 aa)) is the KH-like domain. Over residues 459–480 (NAKDEENTSAKKESPSKVSHRE) the composition is skewed to basic and acidic residues. The tract at residues 459–487 (NAKDEENTSAKKESPSKVSHRESKNRRFV) is disordered.

Belongs to the TRAFAC class TrmE-Era-EngA-EngB-Septin-like GTPase superfamily. EngA (Der) GTPase family. Associates with the 50S ribosomal subunit.

Functionally, GTPase that plays an essential role in the late steps of ribosome biogenesis. The polypeptide is GTPase Der (Helicobacter hepaticus (strain ATCC 51449 / 3B1)).